The sequence spans 307 residues: Protease HtpX homolog (307 aa).

Residues 16–36 form a helical membrane-spanning segment; that stretch reads LFMGVGYLIGGAAGAMIALVV. His-130 contacts Zn(2+). Glu-131 is an active-site residue. A Zn(2+)-binding site is contributed by His-134. A run of 2 helical transmembrane segments spans residues 145–165 and 172–192; these read ITAT…FFGG and GPGI…AMLV. A Zn(2+)-binding site is contributed by Glu-201. Residues 278-307 form a disordered region; it reads AGQSGSATPDPAPAPRGPWNGGAPRRGPWG.

This sequence belongs to the peptidase M48B family. It depends on Zn(2+) as a cofactor.

It localises to the cell inner membrane. The protein is Protease HtpX homolog of Nitrobacter hamburgensis (strain DSM 10229 / NCIMB 13809 / X14).